Here is a 779-residue protein sequence, read N- to C-terminus: Neutral ceramidase 1 (779 aa).

The Nucleophile role is filled by Ser-350. Residues Asn-368, Asn-432, and Asn-667 are each glycosylated (N-linked (GlcNAc...) asparagine).

This sequence belongs to the neutral ceramidase family. In terms of tissue distribution, mostly expressed in stems, leaves, roots and siliques, and, to a lower extent, in flowers.

Its subcellular location is the secreted. The protein resides in the endoplasmic reticulum. It localises to the golgi apparatus. It carries out the reaction an N-acylsphing-4-enine + H2O = sphing-4-enine + a fatty acid. In terms of biological role, hydrolyzes the sphingolipid ceramide into sphingosine and free fatty acid. Regulates sphingolipid homeostasis. Promotes oxidative stress resistance. This chain is Neutral ceramidase 1, found in Arabidopsis thaliana (Mouse-ear cress).